The chain runs to 567 residues: Probable E3 ubiquitin-protein ligase ARI8 (567 aa).

The tract at residues 1 to 27 (MEADDDFYSGTENYSDYADSDEDDADG) is disordered. Residues 18-27 (ADSDEDDADG) show a composition bias toward acidic residues. The segment at 124–337 (GELDCGICFE…GGFYACNRYE (214 aa)) is TRIAD supradomain. C128, C131, C145, H147, C150, C153, C173, C178, C217, C222, C239, C241, C246, C249, H254, C259, C286, and C289 together coordinate Zn(2+). Residues 128–178 (CGICFETFLSDKLHAAACGHPFCDSCWEGYITTAINDGPGCLTLRCPDPSC) form an RING-type 1 zinc finger. Residues 197-259 (QKYTSYFVRS…AEEAHRPVDC (63 aa)) form an IBR-type zinc finger. The RING-type 2; atypical zinc-finger motif lies at 286-316 (CPKCKRPIEKNQGCMHITCTPPCKFEFCWLC). C299 is a catalytic residue. C304, C308, C313, C316, H323, and C333 together coordinate Zn(2+). The disordered stretch occupies residues 514–543 (DAYDRTSSSKSLGGKTKGSSSKASSSDSSH). Residues 521–542 (SSKSLGGKTKGSSSKASSSDSS) show a composition bias toward low complexity. The RanBP2-type zinc-finger motif lies at 540–567 (DSSHWPCEYCTYVNPRSTTICQMCEHGR).

Belongs to the RBR family. Ariadne subfamily. It depends on Zn(2+) as a cofactor. As to expression, ubiquitous.

The enzyme catalyses [E2 ubiquitin-conjugating enzyme]-S-ubiquitinyl-L-cysteine + [acceptor protein]-L-lysine = [E2 ubiquitin-conjugating enzyme]-L-cysteine + [acceptor protein]-N(6)-ubiquitinyl-L-lysine.. The protein operates within protein modification; protein ubiquitination. Functionally, might act as an E3 ubiquitin-protein ligase, or as part of E3 complex, which accepts ubiquitin from specific E2 ubiquitin-conjugating enzymes and then transfers it to substrates. The sequence is that of Probable E3 ubiquitin-protein ligase ARI8 (ARI8) from Arabidopsis thaliana (Mouse-ear cress).